The sequence spans 117 residues: DNA-directed RNA polymerase II subunit RPB11 (117 aa).

M1 is modified (N-acetylmethionine).

It belongs to the archaeal Rpo11/eukaryotic RPB11/RPC19 RNA polymerase subunit family. As to quaternary structure, component of the RNA polymerase II (Pol II) core complex consisting of 12 subunits: a ten-subunit catalytic core composed of POLR2A/RPB1, POLR2B/RPB2, POLR2C/RPB3, POLR2I/RPB9, POLR2J/RPB11, POLR2E/RPABC1, POLR2F/RPABC2, POLR2H/RPABC3, POLR2K/RPABC4 and POLR2L/RPABC5 and a mobile stalk composed of two subunits POLR2D/RPB4 and POLR2G/RPB7, protruding from the core and functioning primarily in transcription initiation. Part of Pol II(G) complex, in which Pol II core associates with an additional subunit POLR2M; unlike conventional Pol II, Pol II(G) functions as a transcriptional repressor. Part of TBP-based Pol II pre-initiation complex (PIC), in which Pol II core assembles with general transcription factors and other specific initiation factors including GTF2E1, GTF2E2, GTF2F1, GTF2F2, TCEA1, ERCC2, ERCC3, GTF2H2, GTF2H3, GTF2H4, GTF2H5, GTF2A1, GTF2A2, GTF2B and TBP; this large multi-subunit PIC complex mediates DNA unwinding and targets Pol II core to the transcription start site where the first phosphodiester bond forms. Interacts with AATF. Interacts with PTPN6; this interaction promotes the recruitment of RNA pol II to the PCK1 promoter.

The protein localises to the nucleus. In terms of biological role, core component of RNA polymerase II (Pol II), a DNA-dependent RNA polymerase which synthesizes mRNA precursors and many functional non-coding RNAs using the four ribonucleoside triphosphates as substrates. The polypeptide is DNA-directed RNA polymerase II subunit RPB11 (Polr2j) (Mus musculus (Mouse)).